Consider the following 237-residue polypeptide: Demethylmenaquinone methyltransferase (237 aa).

S-adenosyl-L-methionine contacts are provided by residues Thr-58, Asp-79, and 106–107; that span reads NA.

This sequence belongs to the class I-like SAM-binding methyltransferase superfamily. MenG/UbiE family.

It catalyses the reaction a 2-demethylmenaquinol + S-adenosyl-L-methionine = a menaquinol + S-adenosyl-L-homocysteine + H(+). The protein operates within quinol/quinone metabolism; menaquinone biosynthesis; menaquinol from 1,4-dihydroxy-2-naphthoate: step 2/2. In terms of biological role, methyltransferase required for the conversion of demethylmenaquinol (DMKH2) to menaquinol (MKH2). The polypeptide is Demethylmenaquinone methyltransferase (Bacillus anthracis (strain A0248)).